Reading from the N-terminus, the 62-residue chain is Ranacyclin-T (62 aa).

A signal peptide spans Met1 to Cys22. Positions Val23–Arg43 are excised as a propeptide. Residues Cys49 and Cys59 are joined by a disulfide bond. Lys60 carries the lysine amide modification.

Belongs to the frog skin active peptide (FSAP) family. Brevinin subfamily. As to expression, expressed by the skin granular glands.

It is found in the secreted. Functionally, has antibacterial activity against Gram-positive bacteria B.megaterium Bm11, S.lentus and M.luteus, and Gram-negative bacteria E.coli D22, Y.pseudotuberculosis YP III and P.syringae pv tabaci, and antifungal activity against C.albicans ATCC 10231, C.tropicalis, C.guiller-mondii and P.nicotianae spores. Has weak hemolytic activity. The mature peptide inserts into the hydrophobic core of the bacterial cell membrane and increases permeability without disrupting membrane integrity. Probably binds to the outer membrane surface before aggregating to form transmembrane pores. The polypeptide is Ranacyclin-T (RNCT) (Rana temporaria (European common frog)).